The chain runs to 371 residues: Probable endolytic peptidoglycan transglycosylase RlpA (371 aa).

The N-terminal stretch at 1–25 (MNQRHLWTIVALSVTVLGTPAVGRT) is a signal peptide. Over residues 177–191 (LVASQSQNKSSSSQQ) the composition is skewed to low complexity. A disordered region spans residues 177–196 (LVASQSQNKSSSSQQKSERY).

The protein belongs to the RlpA family.

Lytic transglycosylase with a strong preference for naked glycan strands that lack stem peptides. This chain is Probable endolytic peptidoglycan transglycosylase RlpA, found in Nostoc sp. (strain PCC 7120 / SAG 25.82 / UTEX 2576).